Here is a 156-residue protein sequence, read N- to C-terminus: Small ribosomal subunit protein uS7 (156 aa).

Belongs to the universal ribosomal protein uS7 family. In terms of assembly, part of the 30S ribosomal subunit. Contacts proteins S9 and S11.

Its function is as follows. One of the primary rRNA binding proteins, it binds directly to 16S rRNA where it nucleates assembly of the head domain of the 30S subunit. Is located at the subunit interface close to the decoding center, probably blocks exit of the E-site tRNA. The chain is Small ribosomal subunit protein uS7 from Desulfosudis oleivorans (strain DSM 6200 / JCM 39069 / Hxd3) (Desulfococcus oleovorans).